We begin with the raw amino-acid sequence, 110 residues long: Iron-sulfur cluster assembly protein CyaY (110 aa).

It belongs to the frataxin family.

In terms of biological role, involved in iron-sulfur (Fe-S) cluster assembly. May act as a regulator of Fe-S biogenesis. This Pseudomonas entomophila (strain L48) protein is Iron-sulfur cluster assembly protein CyaY.